A 154-amino-acid chain; its full sequence is dCTP deaminase (154 aa).

Residues 79 to 84 (RSSLAR), Asp95, Gln124, and Tyr138 contribute to the dCTP site.

The protein belongs to the dCTP deaminase family. As to quaternary structure, homotrimer.

The enzyme catalyses dCTP + H2O + H(+) = dUTP + NH4(+). It participates in pyrimidine metabolism; dUMP biosynthesis; dUMP from dCTP (dUTP route): step 1/2. Functionally, catalyzes the deamination of dCTP to dUTP. This chain is dCTP deaminase, found in Pyrococcus abyssi (strain GE5 / Orsay).